A 647-amino-acid chain; its full sequence is Solute carrier family 23 member 2 (647 aa).

A compositionally biased stretch (polar residues) spans Met-1–Ser-11. Residues Met-1–Ala-26 form a disordered region. Residues Thr-8–Tyr-109 are Cytoplasmic-facing. Ser-69 is subject to Phosphoserine. Thr-74 is subject to Phosphothreonine. Ser-77 is subject to Phosphoserine. Phosphothreonine is present on Thr-78. A Phosphoserine modification is found at Ser-80. A helical transmembrane segment spans residues Leu-110–Gly-130. The Extracellular portion of the chain corresponds to Asp-131 to Gln-138. Residues Leu-139–Cys-159 traverse the membrane as a helical segment. A topological domain (cytoplasmic) is located at residue Arg-160. Residues Leu-161–Leu-181 traverse the membrane as a helical segment. Residues Asp-182–Ala-215 are Extracellular-facing. N-linked (GlcNAc...) asparagine glycans are attached at residues Asn-187 and Asn-195. A helical membrane pass occupies residues Ile-216 to Leu-236. At Arg-237–Ala-263 the chain is on the cytoplasmic side. The chain crosses the membrane as a helical span at residues Gly-264–Ser-281. Residues Gln-282–Arg-285 are Extracellular-facing. Residues Asn-286–Gly-299 constitute an intramembrane region (helical). The Extracellular segment spans residues Trp-300–Gln-306. The chain crosses the membrane as a helical span at residues Leu-307 to Phe-327. The Cytoplasmic portion of the chain corresponds to Thr-328–Gly-368. The chain crosses the membrane as a helical span at residues Met-369 to Ile-389. Residues Glu-390–Arg-414 lie on the Extracellular side of the membrane. Residues Gly-415–Ser-435 traverse the membrane as a helical segment. The Cytoplasmic portion of the chain corresponds to Thr-436–Tyr-458. A helical membrane pass occupies residues Gly-459–Leu-479. At Pro-480 to Pro-482 the chain is on the extracellular side. A helical transmembrane segment spans residues Val-483–Leu-503. Over Gln-504–Asn-513 the chain is Cytoplasmic. A helical transmembrane segment spans residues Leu-514–Asn-534. At Pro-535 to Asp-544 the chain is on the extracellular side. The chain crosses the membrane as a helical span at residues Gln-545–Leu-565. Residues Asp-566–Val-647 lie on the Cytoplasmic side of the membrane. At Thr-646 the chain carries Phosphothreonine.

It belongs to the nucleobase:cation symporter-2 (NCS2) (TC 2.A.40) family. As to quaternary structure, interacts with CLSTN3. In terms of processing, phosphorylated. Highly expressed in neural, neuroendocrine, exocrine and endothelial tissues and in osteoblasts. Detected in neurons throughout the central nervous system, in meninges and choroid plexus, in the anterior pituitary, the intermediate lobe, in pancreas, adrenal cortex, gastric glands, and in the inner nuclear layer of the retina.

It localises to the cell membrane. It catalyses the reaction L-ascorbate(out) + 2 Na(+)(out) = L-ascorbate(in) + 2 Na(+)(in). Functionally, sodium/ascorbate cotransporter. Mediates electrogenic uptake of vitamin C, with a stoichiometry of 2 Na(+) for each ascorbate. This Rattus norvegicus (Rat) protein is Solute carrier family 23 member 2 (Slc23a2).